We begin with the raw amino-acid sequence, 71 residues long: Small ribosomal subunit protein bS21 (71 aa).

This sequence belongs to the bacterial ribosomal protein bS21 family.

The protein is Small ribosomal subunit protein bS21 of Shewanella woodyi (strain ATCC 51908 / MS32).